A 222-amino-acid polypeptide reads, in one-letter code: MIF4G domain-containing protein (222 aa).

In terms of domain architecture, MIF4G spans 3–205; sequence EPSREEYKIQ…LEIIEFRAAG (203 aa).

The protein belongs to the MIF4GD family. In terms of assembly, interacts with EIF4G1, EIF4G2 and SLBP; probably tethered by SLBP to the 3'-end of mRNAs ending with the histone stem-loop, it also interacts with EIF4G1 which is bound to their 5'-end.

Its subcellular location is the cytoplasm. The protein localises to the nucleus. Functionally, functions in replication-dependent translation of histone mRNAs which differ from other eukaryotic mRNAs in that they do not end with a poly-A tail but a stem-loop. May participate in circularizing those mRNAs specifically enhancing their translation. This Homo sapiens (Human) protein is MIF4G domain-containing protein (MIF4GD).